Here is a 107-residue protein sequence, read N- to C-terminus: MMNFATRSVLRGSIKVNRLYTASASSSSSTRIPSGFASATSSKSNSSTKSSPSPINSFNNKTNNIFKSNATNNSSLAFGIVEFMVFNGMISTITTTTFNNNNNNNNK.

A disordered region spans residues 23-64 (SASSSSSTRIPSGFASATSSKSNSSTKSSPSPINSFNNKTNN). The segment covering 37-57 (ASATSSKSNSSTKSSPSPINS) has biased composition (low complexity). A helical transmembrane segment spans residues 76 to 98 (LAFGIVEFMVFNGMISTITTTTF).

It is found in the membrane. This is an uncharacterized protein from Dictyostelium discoideum (Social amoeba).